Reading from the N-terminus, the 457-residue chain is MKKMASFSLTTLLKNLGKHHKFLVAFSGGLDSTVLLHGLLSLRDQNHLKLNIRAIHTHEKLIHRPENWSKDADQRLTHCQSQCEQWKVPLEVVKMEVEPRGKGIEAAARTVRYQIFSNALKKDEVLLTGHHQNDQCETVLLALKRGSGPAGLSGMPLAMPLGQSQLLRPQLSFSRHSLQLYALEKGILWMEDEDNQNDRFDRNFLRRHILPLLTARWPHFLESTSRSAALCAEQETLLDELLSEQLCQLQSQEGTLSIQGLAACSEVKRNALLRRWLDSKKVPMPSRDQLARLWKEVALAKSDAQPYLQCGEYQIRRFREHLYLFKSSKKSQPCPALFSIKWPFTPESENKLVLPDHLGELKCTPYRSEGQVIRAPQKNEVISIRFGLTGNIKILGRDRSRHSKKLWQELGIPPWERKRIPLLYFNETLIAAAEVFVTQKGEAKQGEPHCYLEWVKS.

ATP is bound at residue serine 27–serine 32.

It belongs to the tRNA(Ile)-lysidine synthase family.

The protein localises to the cytoplasm. The catalysed reaction is cytidine(34) in tRNA(Ile2) + L-lysine + ATP = lysidine(34) in tRNA(Ile2) + AMP + diphosphate + H(+). Ligates lysine onto the cytidine present at position 34 of the AUA codon-specific tRNA(Ile) that contains the anticodon CAU, in an ATP-dependent manner. Cytidine is converted to lysidine, thus changing the amino acid specificity of the tRNA from methionine to isoleucine. In Hamiltonella defensa subsp. Acyrthosiphon pisum (strain 5AT), this protein is tRNA(Ile)-lysidine synthase.